Consider the following 471-residue polypeptide: UTP--glucose-1-phosphate uridylyltransferase (471 aa).

UTP-binding positions include Leu-87–Gly-90, Lys-101, Gln-164, and Gly-193. Gly-89–Gly-90 provides a ligand contact to substrate. Substrate-binding positions include His-194 and Asn-222–Asp-224. The UTP site is built by Asp-224 and Lys-362.

It belongs to the UDPGP type 1 family.

The protein localises to the cytoplasm. It catalyses the reaction alpha-D-glucose 1-phosphate + UTP + H(+) = UDP-alpha-D-glucose + diphosphate. In terms of biological role, plays a central role as a glucosyl donor in cellular metabolic pathways. The polypeptide is UTP--glucose-1-phosphate uridylyltransferase (UGP) (Astragalus penduliflorus (Mountain lentil)).